The primary structure comprises 316 residues: Transaldolase (316 aa).

Lys132 (schiff-base intermediate with substrate) is an active-site residue.

The protein belongs to the transaldolase family. Type 1 subfamily. As to quaternary structure, homodimer.

The protein resides in the cytoplasm. It carries out the reaction D-sedoheptulose 7-phosphate + D-glyceraldehyde 3-phosphate = D-erythrose 4-phosphate + beta-D-fructose 6-phosphate. The protein operates within carbohydrate degradation; pentose phosphate pathway; D-glyceraldehyde 3-phosphate and beta-D-fructose 6-phosphate from D-ribose 5-phosphate and D-xylulose 5-phosphate (non-oxidative stage): step 2/3. Transaldolase is important for the balance of metabolites in the pentose-phosphate pathway. This chain is Transaldolase, found in Vibrio campbellii (strain ATCC BAA-1116).